The following is a 592-amino-acid chain: A-type ATP synthase subunit A (592 aa).

233 to 240 (GPFGSGKT) contributes to the ATP binding site.

Belongs to the ATPase alpha/beta chains family. In terms of assembly, has multiple subunits with at least A(3), B(3), C, D, E, F, H, I and proteolipid K(x).

Its subcellular location is the cell membrane. It catalyses the reaction ATP + H2O + 4 H(+)(in) = ADP + phosphate + 5 H(+)(out). Its function is as follows. Component of the A-type ATP synthase that produces ATP from ADP in the presence of a proton gradient across the membrane. The A chain is the catalytic subunit. This Saccharolobus islandicus (strain Y.G.57.14 / Yellowstone #1) (Sulfolobus islandicus) protein is A-type ATP synthase subunit A.